The chain runs to 265 residues: Type III pantothenate kinase (265 aa).

An ATP-binding site is contributed by 6–13 (DVGNTHTV). 112-115 (GADR) lines the substrate pocket. Aspartate 114 serves as the catalytic Proton acceptor. Aspartate 134 provides a ligand contact to K(+). Threonine 137 is an ATP binding site. Threonine 189 provides a ligand contact to substrate.

Belongs to the type III pantothenate kinase family. As to quaternary structure, homodimer. The cofactor is NH4(+). K(+) serves as cofactor.

The protein resides in the cytoplasm. It carries out the reaction (R)-pantothenate + ATP = (R)-4'-phosphopantothenate + ADP + H(+). It participates in cofactor biosynthesis; coenzyme A biosynthesis; CoA from (R)-pantothenate: step 1/5. Its function is as follows. Catalyzes the phosphorylation of pantothenate (Pan), the first step in CoA biosynthesis. This Streptomyces avermitilis (strain ATCC 31267 / DSM 46492 / JCM 5070 / NBRC 14893 / NCIMB 12804 / NRRL 8165 / MA-4680) protein is Type III pantothenate kinase.